A 900-amino-acid chain; its full sequence is E3 ubiquitin-protein ligase BRE1-like 2 (900 aa).

Residues 1–31 (MENQESDEPMQKKPHLLDSVSPNSMARNSSP) form a disordered region. A compositionally biased stretch (polar residues) spans 20-31 (VSPNSMARNSSP). 4 coiled-coil regions span residues 63–96 (TVLQ…LQLN), 217–300 (EDAT…KDAA), 437–660 (SRIE…AEME), and 706–737 (SEKQ…EQMK). An RING-type zinc finger spans residues 848–887 (CGVCFDRPKEVVIVKCYHLFCQQCIQRSLEIRHRKCPGCG).

The protein belongs to the BRE1 family. In terms of assembly, may act as a tetramer consisting of two copies of HUB1 and two copies of HUB2. In terms of tissue distribution, ubiquitously expressed.

It localises to the nucleus. The catalysed reaction is S-ubiquitinyl-[E2 ubiquitin-conjugating enzyme]-L-cysteine + [acceptor protein]-L-lysine = [E2 ubiquitin-conjugating enzyme]-L-cysteine + N(6)-ubiquitinyl-[acceptor protein]-L-lysine.. Its pathway is protein modification; protein ubiquitination. E3 ubiquitin-protein ligase that monoubiquitinates H2B to form H2BK143ub1. H2BK143ub1 gives a specific tag for epigenetic transcriptional activation and is also prerequisite for H3K4me and maybe H3K79me. It thereby plays a central role in histone code and gene regulation. Forms a ubiquitin ligase complex in cooperation with the E2 enzyme UBC2/RAD6. The protein is E3 ubiquitin-protein ligase BRE1-like 2 (HUB2) of Arabidopsis thaliana (Mouse-ear cress).